Here is a 22-residue protein sequence, read N- to C-terminus: Cysteine-rich venom protein notescatin (22 aa).

A compositionally biased stretch (basic and acidic residues) spans 1–15 (SNKKDYQKEIVDKHN). A disordered region spans residues 1–22 (SNKKDYQKEIVDKHNALRRSVK).

The protein belongs to the CRISP family. Post-translationally, contains 8 disulfide bonds. Expressed by the venom gland.

It localises to the secreted. In Notechis scutatus scutatus (Mainland tiger snake), this protein is Cysteine-rich venom protein notescatin.